The sequence spans 813 residues: DNA gyrase subunit A (813 aa).

The Topo IIA-type catalytic domain maps to 38-504; sequence LPDVRDGLKP…EIEYLDVEDF (467 aa). Catalysis depends on Y126, which acts as the O-(5'-phospho-DNA)-tyrosine intermediate. The GyrA-box motif lies at 531–537; it reads QNRGGKG.

Belongs to the type II topoisomerase GyrA/ParC subunit family. Heterotetramer, composed of two GyrA and two GyrB chains. In the heterotetramer, GyrA contains the active site tyrosine that forms a transient covalent intermediate with DNA, while GyrB binds cofactors and catalyzes ATP hydrolysis.

It is found in the cytoplasm. The enzyme catalyses ATP-dependent breakage, passage and rejoining of double-stranded DNA.. Functionally, a type II topoisomerase that negatively supercoils closed circular double-stranded (ds) DNA in an ATP-dependent manner to modulate DNA topology and maintain chromosomes in an underwound state. Negative supercoiling favors strand separation, and DNA replication, transcription, recombination and repair, all of which involve strand separation. Also able to catalyze the interconversion of other topological isomers of dsDNA rings, including catenanes and knotted rings. Type II topoisomerases break and join 2 DNA strands simultaneously in an ATP-dependent manner. The sequence is that of DNA gyrase subunit A from Treponema pallidum (strain Nichols).